The chain runs to 456 residues: Membrane-bound lytic murein transglycosylase F (456 aa).

An N-terminal signal peptide occupies residues 1–22 (MKTWPSRAVSLLLLALALPVGC). The non-LT domain stretch occupies residues 23 to 267 (SEPPPPVRDP…ALDETWFGRF (245 aa)). Residues 268-456 (GDYDYVDVAR…YRALLAAQDL (189 aa)) are LT domain. E314 is a catalytic residue.

The protein in the N-terminal section; belongs to the bacterial solute-binding protein 3 family. It in the C-terminal section; belongs to the transglycosylase Slt family.

It localises to the cell outer membrane. It catalyses the reaction Exolytic cleavage of the (1-&gt;4)-beta-glycosidic linkage between N-acetylmuramic acid (MurNAc) and N-acetylglucosamine (GlcNAc) residues in peptidoglycan, from either the reducing or the non-reducing ends of the peptidoglycan chains, with concomitant formation of a 1,6-anhydrobond in the MurNAc residue.. Functionally, murein-degrading enzyme that degrades murein glycan strands and insoluble, high-molecular weight murein sacculi, with the concomitant formation of a 1,6-anhydromuramoyl product. Lytic transglycosylases (LTs) play an integral role in the metabolism of the peptidoglycan (PG) sacculus. Their lytic action creates space within the PG sacculus to allow for its expansion as well as for the insertion of various structures such as secretion systems and flagella. The protein is Membrane-bound lytic murein transglycosylase F of Maricaulis maris (strain MCS10) (Caulobacter maris).